Reading from the N-terminus, the 78-residue chain is Small ribosomal subunit protein bS18 (78 aa).

The protein belongs to the bacterial ribosomal protein bS18 family. In terms of assembly, part of the 30S ribosomal subunit. Forms a tight heterodimer with protein bS6.

In terms of biological role, binds as a heterodimer with protein bS6 to the central domain of the 16S rRNA, where it helps stabilize the platform of the 30S subunit. The chain is Small ribosomal subunit protein bS18 from Alkaliphilus oremlandii (strain OhILAs) (Clostridium oremlandii (strain OhILAs)).